The sequence spans 972 residues: Hyaluronan synthase (972 aa).

Residues 152-325 (KPEHQHVGLS…VSLDWRLEQF (174 aa)) form an A1 region. Residues 432 to 604 (EDSHINRVPL…IRAWHLTDGF (173 aa)) form an A2 region.

The protein belongs to the glycosyltransferase 2 family. CS/HAS subfamily. Requires Mg(2+) as cofactor. Co(2+) serves as cofactor.

The protein localises to the cell membrane. It carries out the reaction [hyaluronan](n) + UDP-N-acetyl-alpha-D-glucosamine = N-acetyl-beta-D-glucosaminyl-(1-&gt;4)-[hyaluronan](n) + UDP + H(+). The enzyme catalyses N-acetyl-beta-D-glucosaminyl-(1-&gt;4)-[hyaluronan](n) + UDP-alpha-D-glucuronate = [hyaluronan](n+1) + UDP + H(+). The catalysed reaction is 3-O-(beta-D-GalNAc-(1-&gt;4)-beta-D-GlcA-(1-&gt;3)-beta-D-Gal-(1-&gt;3)-beta-D-Gal-(1-&gt;4)-beta-D-Xyl)-L-seryl-[protein] + UDP-alpha-D-glucuronate = 3-O-(beta-D-GlcA-(1-&gt;3)-beta-D-GalNAc-(1-&gt;4)-beta-D-GlcA-(1-&gt;3)-beta-D-Gal-(1-&gt;3)-beta-D-Gal-(1-&gt;4)-beta-D-Xyl)-L-seryl-[protein] + UDP + H(+). It catalyses the reaction 3-O-{[beta-D-GalNAc-(1-&gt;4)-beta-D-GlcA-(1-&gt;3)](n)-beta-D-GalNAc-(1-&gt;4)-beta-D-GlcA-(1-&gt;3)-beta-D-Gal-(1-&gt;3)-beta-D-Gal-(1-&gt;4)-beta-D-Xyl}-L-seryl-[protein] + UDP-alpha-D-glucuronate = 3-O-{beta-D-GlcA-(1-&gt;3)-[beta-D-GalNAc-(1-&gt;4)-beta-D-GlcA-(1-&gt;3)](n)-beta-D-GalNAc-(1-&gt;4)-beta-D-GlcA-(1-&gt;3)-beta-D-Gal-(1-&gt;3)-beta-D-Gal-(1-&gt;4)-beta-D-Xyl}-L-seryl-[protein] + UDP + H(+). Functionally, catalyzes the polymerization of hyaluronan, a polysaccharide composed of a repeating disaccharide of N-acetylglucosamine (GlcNAc) and glucuronic acid (GlcUA) units. Each unit has the composition in beta-(1-&gt;4)-GlcUA-beta-(1-&gt;3)-GlcNAc. The polypeptide is Hyaluronan synthase (hyaD) (Pasteurella multocida).